The primary structure comprises 394 residues: Gastricsin (394 aa).

A signal peptide spans 1-16 (MKWMVVVLLCLPLLEA). Positions 17–65 (TQIKVPLKKIKSIREVLREKGLLGDFLKNHKPQHARKFFRNRLAKTGDF) are cleaved as a propeptide — activation peptide. In terms of domain architecture, Peptidase A1 spans 79–391 (YFGQISLGTP…DLANNRVGFA (313 aa)). Residue aspartate 97 is part of the active site. 2 disulfides stabilise this stretch: cysteine 110-cysteine 115 and cysteine 273-cysteine 277. Threonine 283 is an active-site residue. Cysteine 316 and cysteine 349 are disulfide-bonded.

Belongs to the peptidase A1 family.

The protein resides in the secreted. It carries out the reaction More restricted specificity than pepsin A, but shows preferential cleavage at Tyr-|-Xaa bonds. High activity on hemoglobin.. Functionally, hydrolyzes a variety of proteins. This chain is Gastricsin (PGC), found in Cavia porcellus (Guinea pig).